Reading from the N-terminus, the 186-residue chain is Transcription factor FapR (186 aa).

This sequence belongs to the FapR family.

Functionally, transcriptional factor involved in regulation of membrane lipid biosynthesis by repressing genes involved in fatty acid and phospholipid metabolism. This Staphylococcus epidermidis (strain ATCC 35984 / DSM 28319 / BCRC 17069 / CCUG 31568 / BM 3577 / RP62A) protein is Transcription factor FapR.